The chain runs to 228 residues: Lipoprotein-releasing system ATP-binding protein LolD (228 aa).

The ABC transporter domain occupies 9–228; that stretch reads LEAHDIQKNF…ELINGCLYRR (220 aa). 44–51 contacts ATP; sequence GRSGEGKS.

The protein belongs to the ABC transporter superfamily. Lipoprotein translocase (TC 3.A.1.125) family. In terms of assembly, the complex is composed of two ATP-binding proteins (LolD) and two transmembrane proteins (LolC and LolE).

Its subcellular location is the cell inner membrane. Functionally, part of the ABC transporter complex LolCDE involved in the translocation of mature outer membrane-directed lipoproteins, from the inner membrane to the periplasmic chaperone, LolA. Responsible for the formation of the LolA-lipoprotein complex in an ATP-dependent manner. This is Lipoprotein-releasing system ATP-binding protein LolD from Protochlamydia amoebophila (strain UWE25).